Reading from the N-terminus, the 878-residue chain is MSKVHNSEYIKELSVDNTSYKIYDINKAASDIELPLKKLPYSLRVLFENVLRSNGSKQNLLVFKEWLKTKESDAEIDFMPARVLMQDFTGVPAIVDLAAMRDAMKKIGGDPLKINPLIPVDLVIDHSVSVDSYAAKDSFDKNVQMEMKRNIERYQFLKWGQQAFNNFKVVPPGTGICHQVNLEYLAKVVWHKDGLAYPDSLVGTDSHTTMVNGLSVLGWGVGGIEAEAAMLGQPLTMILPEVIGVKLTGKLTGIATATDLVLTVTEMLRKKKVVGKFVEFFGEGLKNLTIADRATISNMSPEYGATCGFFPIDQETIKYLELTGREKTQIKLVEKYANEQNLWYDFEHEAEYTEILELDLSMVHSSLAGPRRPQDRVDLNDVANNFKHELPNFGIENKDIDKKYAVANQNYEIGNGDVVIAAITSCTNTSNPSVMIGAALLAKKALEHGLKVKPWVKTSLAPGSKVVTEYLKLSGLDKYLDELGFNLVGYGCTTCIGNSGPLNPEIEETINKNGLVVASVLSGNRNFEGRINPLTKASYLGSPILVVAYALSGTLNIDLNNQPIGKNIYLKDIWPSKEEIDEVIANSINSSMFIEKYSDIFSGTKEWKDLQITTSSTYNWNKNSTYINNPPYFEDIGSKNNIKDIKSAKILAIFGDSITTDHISPAGSISKTSPAAKYLTDNHIEPLDFNSYGSRRGNHEVMMRGTFANIRIKNEMCKGVEGGFTINQLSSTQQTIYDAAMDYKANDVPVVIFAGKEYGSGSSRDWAAKGPQLLGVKAVIAESFERIHRSNLVGMGILPLTFTGNNTRLDLKLDGSETIDIIGLSEQIKPYNPVKCMIKKQTGETRTIDLILQIFTDNEINYIKHGSIMHFVVENLKG.

C426, C492, and C495 together coordinate [4Fe-4S] cluster.

It belongs to the aconitase/IPM isomerase family. As to quaternary structure, monomer. It depends on [4Fe-4S] cluster as a cofactor.

The enzyme catalyses citrate = D-threo-isocitrate. It carries out the reaction (2S,3R)-3-hydroxybutane-1,2,3-tricarboxylate = 2-methyl-cis-aconitate + H2O. It functions in the pathway carbohydrate metabolism; tricarboxylic acid cycle; isocitrate from oxaloacetate: step 2/2. It participates in organic acid metabolism; propanoate degradation. Its function is as follows. Involved in the catabolism of short chain fatty acids (SCFA) via the tricarboxylic acid (TCA)(acetyl degradation route) and probably the 2-methylcitrate cycle I (propionate degradation route). Catalyzes the reversible isomerization of citrate to isocitrate via cis-aconitate. Could catalyze the hydration of 2-methyl-cis-aconitate to yield (2R,3S)-2-methylisocitrate. The apo form of AcnA functions as a RNA-binding regulatory protein. This is Aconitate hydratase A (acnA) from Rickettsia felis (strain ATCC VR-1525 / URRWXCal2) (Rickettsia azadi).